Reading from the N-terminus, the 275-residue chain is Interleukin-2 receptor subunit alpha (275 aa).

The signal sequence occupies residues Met1–Thr21. Sushi domains follow at residues Glu22–Ser81 and Gly121–Ser186. The Extracellular segment spans residues Glu22 to Gln243. 3 disulfides stabilise this stretch: Cys24/Cys64, Cys49/Cys77, and Cys51/Cys79. Residue Asn80 is glycosylated (N-linked (GlcNAc...) asparagine). The segment at Lys86 to Glu130 is disordered. A compositionally biased stretch (basic and acidic residues) spans Gly121–Glu130. 2 cysteine pairs are disulfide-bonded: Cys123–Cys168 and Cys152–Cys184. Residues Gly188–Leu213 form a disordered region. A helical transmembrane segment spans residues Ile244–Leu262. The Cytoplasmic portion of the chain corresponds to Thr263–Ile275.

In terms of assembly, non-covalent dimer of an alpha and a beta subunit. IL2R exists in 3 different forms: a high affinity dimer, an intermediate affinity monomer (beta subunit), and a low affinity monomer (alpha subunit). The high and intermediate affinity forms also associate with a gamma subunit.

Its subcellular location is the membrane. Receptor for interleukin-2. The receptor is involved in the regulation of immune tolerance by controlling regulatory T cells (TREGs) activity. TREGs suppress the activation and expansion of autoreactive T-cells. In Ovis aries (Sheep), this protein is Interleukin-2 receptor subunit alpha (IL2RA).